The sequence spans 369 residues: Endophilin-A (369 aa).

Positions 18-248 (TEKMGGAEGT…LQEKRSEAES (231 aa)) constitute a BAR domain. The stretch at 227-247 (QCADVLRGLQETLQEKRSEAE) forms a coiled coil. A disordered region spans residues 266-295 (GGGGGLNEDGTPSHISSSASPLPSPMRSPA). Residues 277 to 294 (PSHISSSASPLPSPMRSP) show a composition bias toward low complexity. The SH3 domain maps to 305 to 364 (QQQPCCQALYDFEPENPGELAFKENDIITLLNRVDDNWFEGAVNGRTGYFPQSYVQVQVP).

The protein belongs to the endophilin family.

The protein resides in the cytoplasm. Its subcellular location is the membrane. Required presynaptically at the neuromuscular junction. Implicated in synaptic vesicle endocytosis. This chain is Endophilin-A, found in Drosophila erecta (Fruit fly).